Here is an 812-residue protein sequence, read N- to C-terminus: 5-methyltetrahydropteroyltriglutamate--homocysteine methyltransferase 3, chloroplastic (812 aa).

The N-terminal 33 residues, 1–33 (MGQLALQRLQPLASLPRRPPSLPPPSSATPSLP), are a transit peptide targeting the chloroplast. Residues 13–33 (ASLPRRPPSLPPPSSATPSLP) form a disordered region. Residues 17 to 27 (RRPPSLPPPSS) are compositionally biased toward pro residues. 5-methyltetrahydropteroyltri-L-glutamate contacts are provided by K66 and N164. A disordered region spans residues 430-456 (MRQASRRSSPRVTNAAVQQDVDAVKKS). L-homocysteine is bound by residues 485–487 (IGS) and E538. L-methionine-binding positions include 485–487 (IGS) and E538. 5-methyltetrahydropteroyltri-L-glutamate is bound by residues D543, Y566, 569–570 (RC), and W615. D653 provides a ligand contact to L-homocysteine. D653 contacts L-methionine. Residues H695, C697, H706, D710, and E719 each coordinate Zn(2+). The Proton donor role is filled by H749. C781 contacts Zn(2+).

The protein belongs to the vitamin-B12 independent methionine synthase family. It depends on Zn(2+) as a cofactor. Expressed in seeds.

The protein localises to the plastid. Its subcellular location is the chloroplast. It catalyses the reaction 5-methyltetrahydropteroyltri-L-glutamate + L-homocysteine = tetrahydropteroyltri-L-glutamate + L-methionine. It functions in the pathway amino-acid biosynthesis; L-methionine biosynthesis via de novo pathway; L-methionine from L-homocysteine (MetE route): step 1/1. Functionally, catalyzes the transfer of a methyl group from 5-methyltetrahydrofolate to homocysteine resulting in methionine formation. This chain is 5-methyltetrahydropteroyltriglutamate--homocysteine methyltransferase 3, chloroplastic (MS3), found in Arabidopsis thaliana (Mouse-ear cress).